Reading from the N-terminus, the 54-residue chain is Photosystem II reaction center protein K (54 aa).

The propeptide occupies M1–G17. Residues L29–A49 traverse the membrane as a helical segment.

This sequence belongs to the PsbK family. As to quaternary structure, PSII is composed of 1 copy each of membrane proteins PsbA, PsbB, PsbC, PsbD, PsbE, PsbF, PsbH, PsbI, PsbJ, PsbK, PsbL, PsbM, PsbT, PsbY, PsbZ, Psb30/Ycf12, at least 3 peripheral proteins of the oxygen-evolving complex and a large number of cofactors. It forms dimeric complexes.

The protein resides in the plastid. It is found in the chloroplast thylakoid membrane. Functionally, one of the components of the core complex of photosystem II (PSII). PSII is a light-driven water:plastoquinone oxidoreductase that uses light energy to abstract electrons from H(2)O, generating O(2) and a proton gradient subsequently used for ATP formation. It consists of a core antenna complex that captures photons, and an electron transfer chain that converts photonic excitation into a charge separation. In Euglena gracilis, this protein is Photosystem II reaction center protein K.